Here is a 347-residue protein sequence, read N- to C-terminus: 4-hydroxy-2-oxovalerate aldolase (347 aa).

The region spanning 11 to 262 (PVVVDTTLRD…NPGLDVFKLL (252 aa)) is the Pyruvate carboxyltransferase domain. 19 to 20 (RD) provides a ligand contact to substrate. Residue D20 participates in Mn(2+) binding. The active-site Proton acceptor is H23. Residues S173 and H201 each coordinate substrate. Mn(2+)-binding residues include H201 and H203. Residue Y292 participates in substrate binding.

This sequence belongs to the 4-hydroxy-2-oxovalerate aldolase family. Homodimer. Can also form a heterotetramer composed of two aldolase (TTHB246) and two dehydrogenase (TTHB247) subunits. Upon complex formation, the aldolase shows a 5-fold increase in substrate affinity, while the dehydrogenase shows a 3-fold decrease; the kcat values of each enzyme are reduced by 2-fold when they are in a complex. The cofactor is Co(2+). Requires Ni(2+) as cofactor. Mn(2+) serves as cofactor.

The catalysed reaction is (S)-4-hydroxy-2-oxopentanoate = acetaldehyde + pyruvate. It carries out the reaction (S)-4-hydroxy-2-oxohexanoate = propanal + pyruvate. Appears to be allosterically activated by NADH. Catalyzes the retro-aldol cleavage of both 4-hydroxy-2-oxopentanoate (HOPA) and 4-hydroxy-2-oxohexanoate (HOHA) to pyruvate and acetaldehyde or propanaldehyde, respectively. The aldehydes produced by this reaction are directly channeled to the dehydrogenase TTHB247, ensuring that these toxic aldehydes are sequestered from cellular components. Is involved in the meta-cleavage pathway for the degradation of aromatic compounds. Appears to be stereospecific since it can cleave (4S)-4-hydroxy-2-oxopentanoate but not the (4R) isomer. Is not able to catalyze the aldol addition of 2-oxobutyrate with acetaldehyde; this indicates that the enzyme is specific for pyruvate as the carbonyl donor. The polypeptide is 4-hydroxy-2-oxovalerate aldolase (Thermus thermophilus (strain ATCC 27634 / DSM 579 / HB8)).